The primary structure comprises 267 residues: ATP synthase subunit a (267 aa).

5 helical membrane-spanning segments follow: residues 38–58 (WHID…FVFY), 98–118 (IAPL…MDLI), 145–165 (NITF…SIKI), 208–228 (LFGN…MPWW), and 238–258 (AIFH…LTIV).

This sequence belongs to the ATPase A chain family. As to quaternary structure, F-type ATPases have 2 components, CF(1) - the catalytic core - and CF(0) - the membrane proton channel. CF(1) has five subunits: alpha(3), beta(3), gamma(1), delta(1), epsilon(1). CF(0) has three main subunits: a(1), b(2) and c(9-12). The alpha and beta chains form an alternating ring which encloses part of the gamma chain. CF(1) is attached to CF(0) by a central stalk formed by the gamma and epsilon chains, while a peripheral stalk is formed by the delta and b chains.

It localises to the cell inner membrane. In terms of biological role, key component of the proton channel; it plays a direct role in the translocation of protons across the membrane. This Psychromonas ingrahamii (strain DSM 17664 / CCUG 51855 / 37) protein is ATP synthase subunit a.